The chain runs to 353 residues: Probable transport protein YPL264C (353 aa).

At 1-16 the chain is on the cytoplasmic side; the sequence is MTLQRISKDYLKPNYG. A helical membrane pass occupies residues 17 to 37; sequence LILLIVSYFFNSSMVVSTKVL. Residues 24-160 enclose the EamA 1 domain; sequence YFFNSSMVVS…SFSGVVLIIR (137 aa). Topologically, residues 38-51 are extracellular; the sequence is ENDPLETSQSRINP. The chain crosses the membrane as a helical span at residues 52–69; it reads LQILLVRMSITYCCTLVY. The Cytoplasmic portion of the chain corresponds to 70 to 94; the sequence is MHWNKQSVPDIPWGPAPCRKWLILR. The helical transmembrane segment at 95–115 threads the bilayer; it reads GIMGFFGVFGMYFSLMYLSIS. Aspartate 116 is a topological domain (extracellular). Residues 117-137 traverse the membrane as a helical segment; sequence AVLITFMSPTLTIFLSFLLLG. Over 138–144 the chain is Cytoplasmic; it reads EPFSKLE. Residues 145 to 165 traverse the membrane as a helical segment; sequence ALGSLISFSGVVLIIRPTFLF. At 166-188 the chain is on the extracellular side; that stretch reads GEQTQGQQSPQDDIVETQNPKLR. Residues 189 to 209 traverse the membrane as a helical segment; sequence LIAIGVSLLGVCGLSSVYIII. Residues 200–326 enclose the EamA 2 domain; it reads CGLSSVYIII…IVSSTIWVIN (127 aa). Over 210–218 the chain is Cytoplasmic; it reads RYIGNKAHA. The chain crosses the membrane as a helical span at residues 219–239; that stretch reads IMSVSYFSLVTTVVAALGVLL. The Extracellular segment spans residues 240-254; that stretch reads IPSMSLQLPHSWKQW. A helical membrane pass occupies residues 255 to 275; that stretch reads GLFLNLGISGFIHQILLTMGI. The Cytoplasmic segment spans residues 276–282; sequence QRERAGR. Residues 283–303 traverse the membrane as a helical segment; it reads GSLMTYTQVIYAVFWDVVLFH. Histidine 304 is a topological domain (extracellular). Residues 305 to 325 traverse the membrane as a helical segment; sequence WPNIWTWCGMAVIVSSTIWVI. Residues 326 to 353 are Cytoplasmic-facing; the sequence is NMRASKQNVVATAELLSTSDFELDDLED.

The protein localises to the membrane. The sequence is that of Probable transport protein YPL264C from Saccharomyces cerevisiae (strain ATCC 204508 / S288c) (Baker's yeast).